A 191-amino-acid chain; its full sequence is Prophage tail fiber assembly protein homolog TfaR (191 aa).

This sequence belongs to the tfa family.

This Escherichia coli (strain K12) protein is Prophage tail fiber assembly protein homolog TfaR (tfaR).